We begin with the raw amino-acid sequence, 387 residues long: Homoserine O-succinyltransferase (387 aa).

Residues 49–358 enclose the AB hydrolase-1 domain; sequence NAILICHALS…DAEQGHDSFL (310 aa). Residue Ser-156 is the Nucleophile of the active site. Residue Arg-226 participates in substrate binding. Active-site residues include Asp-321 and His-354. Residue Asp-355 coordinates substrate.

This sequence belongs to the AB hydrolase superfamily. MetX family. As to quaternary structure, homodimer.

The protein resides in the cytoplasm. The enzyme catalyses L-homoserine + succinyl-CoA = O-succinyl-L-homoserine + CoA. It functions in the pathway amino-acid biosynthesis; L-methionine biosynthesis via de novo pathway; O-succinyl-L-homoserine from L-homoserine: step 1/1. Its activity is regulated as follows. Requires MetW for activity. In terms of biological role, transfers a succinyl group from succinyl-CoA to L-homoserine, forming succinyl-L-homoserine. The chain is Homoserine O-succinyltransferase from Acinetobacter baylyi (strain ATCC 33305 / BD413 / ADP1).